The primary structure comprises 265 residues: Diphthine synthase (265 aa).

S-adenosyl-L-methionine is bound by residues L10, D87, V90, 115-116 (SI), L166, A209, and H234.

It belongs to the diphthine synthase family. As to quaternary structure, homodimer.

The enzyme catalyses 2-[(3S)-amino-3-carboxypropyl]-L-histidyl-[translation elongation factor 2] + 3 S-adenosyl-L-methionine = diphthine-[translation elongation factor 2] + 3 S-adenosyl-L-homocysteine + 3 H(+). Its pathway is protein modification; peptidyl-diphthamide biosynthesis. S-adenosyl-L-methionine-dependent methyltransferase that catalyzes the trimethylation of the amino group of the modified target histidine residue in translation elongation factor 2 (EF-2), to form an intermediate called diphthine. The three successive methylation reactions represent the second step of diphthamide biosynthesis. The polypeptide is Diphthine synthase (Pyrococcus horikoshii (strain ATCC 700860 / DSM 12428 / JCM 9974 / NBRC 100139 / OT-3)).